Here is a 33-residue protein sequence, read N- to C-terminus: Protein YtiC (33 aa).

The helical transmembrane segment at 10 to 29 threads the bilayer; the sequence is FDMLSIYIIYKLIVSNNTWL.

It localises to the cell inner membrane. In Escherichia coli (strain K12), this protein is Protein YtiC.